Reading from the N-terminus, the 323-residue chain is Peroxisomal and mitochondrial division factor 2 (323 aa).

3 disordered regions span residues 1-55, 73-92, and 120-143; these read MAEE…NDAI, ESKA…KSDE, and TART…SQKG. The Cytoplasmic portion of the chain corresponds to 1 to 297; that stretch reads MAEERSLNGE…WSPNVTAVGS (297 aa). Residues 13 to 26 are compositionally biased toward acidic residues; sequence GQDDESFFDSDQQG. A coiled-coil region spans residues 28-278; sequence DGKSTELNQK…INGLKNVVEE (251 aa). Residues 298 to 318 traverse the membrane as a helical segment; sequence GGAVAAVAVAVAGAAVVCYIY. Residues 319-323 lie on the Mitochondrial intermembrane side of the membrane; sequence HSRRV.

In terms of assembly, homodimer. Interacts with PMD1.

It localises to the mitochondrion outer membrane. In terms of biological role, involved in morphogenesis and proliferation of mitochondria. Does not act redundantly with PMD1. Is not involved in peroxisomal proliferation. This Arabidopsis thaliana (Mouse-ear cress) protein is Peroxisomal and mitochondrial division factor 2.